The sequence spans 223 residues: Serine/threonine/tyrosine-interacting protein B (223 aa).

The Tyrosine-protein phosphatase domain maps to 28–176 (EMQEILPGLF…LQEYEAIYLA (149 aa)).

Belongs to the protein-tyrosine phosphatase family. Non-receptor class subfamily.

Its function is as follows. Catalytically inactive phosphatase. The protein is Serine/threonine/tyrosine-interacting protein B (styx-b) of Xenopus laevis (African clawed frog).